Reading from the N-terminus, the 359-residue chain is MQVPNSTGPDNATLQMLRNPAIAVALPVVYSLVAAVSIPGNLFSLWVLCRRMGPRSPSVIFMINLSVTDLMLASVLPFQIYYHCNRHHWVFGVLLCNVVTVAFYANMYSSILTMTCISVERFLGVLYPLSSKRWRRRRYAVAACAGTWLLLLTALSPLARTDLTYPVHALGIITCFDVLKWTMLPSVAMWAVFLFTIFILLFLIPFVITVACYTATILKLLRTEEAHGREQRRRAVGLAAVVLLAFVTCFAPNNFVLLAHIVSRLFYGKSYYHVYKLTLCLSCLNNCLDPFVYYFASREFQLRLREYLGCRRVPRDTLDTRRESLFSARTTSVRSEAGAHPEGMEGATRPGLQRQESVF.

Topologically, residues 1–19 (MQVPNSTGPDNATLQMLRN) are extracellular. Asn5 and Asn11 each carry an N-linked (GlcNAc...) asparagine glycan. The chain crosses the membrane as a helical span at residues 20 to 40 (PAIAVALPVVYSLVAAVSIPG). The Cytoplasmic segment spans residues 41-57 (NLFSLWVLCRRMGPRSP). The helical transmembrane segment at 58–78 (SVIFMINLSVTDLMLASVLPF) threads the bilayer. Residues 79–88 (QIYYHCNRHH) are Extracellular-facing. A helical transmembrane segment spans residues 89–109 (WVFGVLLCNVVTVAFYANMYS). The Cytoplasmic segment spans residues 110-138 (SILTMTCISVERFLGVLYPLSSKRWRRRR). The chain crosses the membrane as a helical span at residues 139-159 (YAVAACAGTWLLLLTALSPLA). Residues 160 to 187 (RTDLTYPVHALGIITCFDVLKWTMLPSV) lie on the Extracellular side of the membrane. Residues 188–208 (AMWAVFLFTIFILLFLIPFVI) traverse the membrane as a helical segment. Topologically, residues 209-237 (TVACYTATILKLLRTEEAHGREQRRRAVG) are cytoplasmic. A helical membrane pass occupies residues 238–258 (LAAVVLLAFVTCFAPNNFVLL). The Extracellular segment spans residues 259–275 (AHIVSRLFYGKSYYHVY). The chain crosses the membrane as a helical span at residues 276 to 296 (KLTLCLSCLNNCLDPFVYYFA). The Cytoplasmic portion of the chain corresponds to 297-359 (SREFQLRLRE…PGLQRQESVF (63 aa)). The interval 329–359 (RTTSVRSEAGAHPEGMEGATRPGLQRQESVF) is disordered.

This sequence belongs to the G-protein coupled receptor 1 family. Barely detectable in normal blood leukocytes. Weaker expression was seen in heart, kidney and lung. Not detected in brain. Expressed in B cells and follicular helper T cells in germinal centers (at protein level).

The protein resides in the cell membrane. Functionally, g protein-coupled receptor for S-geranylgeranyl-glutathione (GGG), an endogenous metabolite present in lymphoid tissues. Couples the binding of GGG to the activation of GNA13 and downstream repression of AKT activation in lymphocytes defining their positioning and growth within lymphoid organs. In lymphoid follicles, confines B cells and follicular helper T cells in germinal centers (GCs) in response to GGG local gradients established by GGT5 (via GGG catabolism) and ABCC1 (via extracellular transport) with lower concentrations of GGG found in the follicular dendritic cell network region around which germinal centers are formed. In the bone marrow, also in response to GGG gradients established by GGT5 and ABCC1, it restricts chemotactic transmigration of B cells, T cells and NK cells from blood vessels to the bone marrow parenchyma. Contributes to GNA13-dependent pathway that suppresses GC B cell growth. The polypeptide is S-geranylgeranyl-glutathione receptor P2RY8 (Homo sapiens (Human)).